The chain runs to 195 residues: CASP-like protein 1B2 (195 aa).

At 1–25 (MDLEKGKKPSEQAAACRIMQVKDKL) the chain is on the cytoplasmic side. A helical membrane pass occupies residues 26–46 (ITLQPVVRACVFLATAVAAVI). Topologically, residues 47 to 78 (MGLNKQSYTTVVAIVGTRPVTQTFTAKFKDTP) are extracellular. Residues 79 to 99 (AFVFFVIANAIASGYNLMVLV) form a helical membrane-spanning segment. Residues 100–114 (TRRILQRRAQSLSVH) are Cytoplasmic-facing. Residues 115–135 (LLDMVILTLLATGSATAASMA) traverse the membrane as a helical segment. Over 136 to 160 (QLGKNGNLHARWNPICDKFGSFCNH) the chain is Extracellular. The chain crosses the membrane as a helical span at residues 161 to 181 (GGIALVSSFIGVALMLALNLL). Residues 182-195 (SAAANSPRSNVTGQ) are Cytoplasmic-facing.

The protein belongs to the Casparian strip membrane proteins (CASP) family. Homodimer and heterodimers.

It is found in the cell membrane. The polypeptide is CASP-like protein 1B2 (Oryza sativa subsp. indica (Rice)).